A 142-amino-acid polypeptide reads, in one-letter code: Clock-controlled protein 6 (142 aa).

Belongs to the SED1 family.

This chain is Clock-controlled protein 6 (ccg-6), found in Neurospora crassa (strain ATCC 24698 / 74-OR23-1A / CBS 708.71 / DSM 1257 / FGSC 987).